Here is a 171-residue protein sequence, read N- to C-terminus: Adenine phosphoribosyltransferase (171 aa).

This sequence belongs to the purine/pyrimidine phosphoribosyltransferase family. As to quaternary structure, homodimer.

It localises to the cytoplasm. The enzyme catalyses AMP + diphosphate = 5-phospho-alpha-D-ribose 1-diphosphate + adenine. Its pathway is purine metabolism; AMP biosynthesis via salvage pathway; AMP from adenine: step 1/1. Functionally, catalyzes a salvage reaction resulting in the formation of AMP, that is energically less costly than de novo synthesis. This chain is Adenine phosphoribosyltransferase, found in Acetivibrio thermocellus (strain ATCC 27405 / DSM 1237 / JCM 9322 / NBRC 103400 / NCIMB 10682 / NRRL B-4536 / VPI 7372) (Clostridium thermocellum).